A 427-amino-acid polypeptide reads, in one-letter code: Glutamate-1-semialdehyde 2,1-aminomutase (427 aa).

K267 carries the N6-(pyridoxal phosphate)lysine modification.

It belongs to the class-III pyridoxal-phosphate-dependent aminotransferase family. HemL subfamily. In terms of assembly, homodimer. Pyridoxal 5'-phosphate is required as a cofactor.

It is found in the cytoplasm. The enzyme catalyses (S)-4-amino-5-oxopentanoate = 5-aminolevulinate. The protein operates within porphyrin-containing compound metabolism; protoporphyrin-IX biosynthesis; 5-aminolevulinate from L-glutamyl-tRNA(Glu): step 2/2. The chain is Glutamate-1-semialdehyde 2,1-aminomutase from Desulfosudis oleivorans (strain DSM 6200 / JCM 39069 / Hxd3) (Desulfococcus oleovorans).